Reading from the N-terminus, the 230-residue chain is UPF0173 metal-dependent hydrolase OEOE_1287 (230 aa).

This sequence belongs to the UPF0173 family.

This chain is UPF0173 metal-dependent hydrolase OEOE_1287, found in Oenococcus oeni (strain ATCC BAA-331 / PSU-1).